Here is a 231-residue protein sequence, read N- to C-terminus: MVGGVRIARARGPPIEPEELDDADGEALVRIARRAVEEWVEHGRRLDVEAGGKLGRPGAAFVTLERRSGDGWELRGCIGVVRPVLPLVEAVVTAAVDAASSDPRFEPLSREELDRVRVEVTVLGSMEPLPKKPHERPALVEVGLHGLYVEKPPYAGLLLPQVAVDEGWDPILFLTWACIKAGLPGTCWLREDVEIYRFRAAVWRETEPRGPVVRRDLAREAAAKGVNARVS.

The AMMECR1 domain maps to valine 29–arginine 214.

This chain is Protein APE_1056.1, found in Aeropyrum pernix (strain ATCC 700893 / DSM 11879 / JCM 9820 / NBRC 100138 / K1).